Here is a 451-residue protein sequence, read N- to C-terminus: tRNA modification GTPase MnmE (451 aa).

Residues R28, E85, and K124 each contribute to the (6S)-5-formyl-5,6,7,8-tetrahydrofolate site. In terms of domain architecture, TrmE-type G spans 220 to 373 (GLYTVLVGPP…LKTRLRTLLL (154 aa)). A K(+)-binding site is contributed by N230. GTP contacts are provided by residues 230-235 (NVGKSS), 249-255 (TDVPGTT), and 274-277 (DTAG). A Mg(2+)-binding site is contributed by S234. Residues T249, V251, and T254 each contribute to the K(+) site. T255 is a Mg(2+) binding site. K451 provides a ligand contact to (6S)-5-formyl-5,6,7,8-tetrahydrofolate.

The protein belongs to the TRAFAC class TrmE-Era-EngA-EngB-Septin-like GTPase superfamily. TrmE GTPase family. As to quaternary structure, homodimer. Heterotetramer of two MnmE and two MnmG subunits. The cofactor is K(+).

The protein localises to the cytoplasm. Functionally, exhibits a very high intrinsic GTPase hydrolysis rate. Involved in the addition of a carboxymethylaminomethyl (cmnm) group at the wobble position (U34) of certain tRNAs, forming tRNA-cmnm(5)s(2)U34. The protein is tRNA modification GTPase MnmE of Xylella fastidiosa (strain Temecula1 / ATCC 700964).